The sequence spans 156 residues: ATP synthase subunit b (156 aa).

Residues 7 to 27 (LIGQTVAFIIFVWFCMKFVWP) form a helical membrane-spanning segment.

This sequence belongs to the ATPase B chain family. F-type ATPases have 2 components, F(1) - the catalytic core - and F(0) - the membrane proton channel. F(1) has five subunits: alpha(3), beta(3), gamma(1), delta(1), epsilon(1). F(0) has three main subunits: a(1), b(2) and c(10-14). The alpha and beta chains form an alternating ring which encloses part of the gamma chain. F(1) is attached to F(0) by a central stalk formed by the gamma and epsilon chains, while a peripheral stalk is formed by the delta and b chains.

It localises to the cell inner membrane. Its function is as follows. F(1)F(0) ATP synthase produces ATP from ADP in the presence of a proton or sodium gradient. F-type ATPases consist of two structural domains, F(1) containing the extramembraneous catalytic core and F(0) containing the membrane proton channel, linked together by a central stalk and a peripheral stalk. During catalysis, ATP synthesis in the catalytic domain of F(1) is coupled via a rotary mechanism of the central stalk subunits to proton translocation. In terms of biological role, component of the F(0) channel, it forms part of the peripheral stalk, linking F(1) to F(0). This chain is ATP synthase subunit b, found in Shewanella sp. (strain MR-4).